We begin with the raw amino-acid sequence, 416 residues long: Adenylosuccinate synthetase (416 aa).

GTP-binding positions include 11 to 17 and 39 to 41; these read GDEGKGK and GHT. Asp12 (proton acceptor) is an active-site residue. Mg(2+) is bound by residues Asp12 and Gly39. IMP contacts are provided by residues 12–15, 37–40, Thr125, Arg139, Gln214, Thr229, and Arg290; these read DEGK and NAGH. The active-site Proton donor is the His40. 286 to 292 is a binding site for substrate; sequence TTTGRPR. Residues Arg292, 318–320, and 405–407 contribute to the GTP site; these read KLD and SLG.

It belongs to the adenylosuccinate synthetase family. In terms of assembly, homodimer. Mg(2+) is required as a cofactor.

The protein localises to the cytoplasm. The catalysed reaction is IMP + L-aspartate + GTP = N(6)-(1,2-dicarboxyethyl)-AMP + GDP + phosphate + 2 H(+). It participates in purine metabolism; AMP biosynthesis via de novo pathway; AMP from IMP: step 1/2. Its function is as follows. Plays an important role in the de novo pathway of purine nucleotide biosynthesis. Catalyzes the first committed step in the biosynthesis of AMP from IMP. The sequence is that of Adenylosuccinate synthetase from Picrophilus torridus (strain ATCC 700027 / DSM 9790 / JCM 10055 / NBRC 100828 / KAW 2/3).